Here is a 436-residue protein sequence, read N- to C-terminus: uncharacterized protein (436 aa).

Positions 1–20 (MKCAVAILLVCLTLQQAAYG) are cleaved as a signal peptide. 3 coiled-coil regions span residues 25 to 87 (EEVK…ALRN), 154 to 207 (MRKT…NSVE), and 247 to 329 (ESWG…ASLL). Over residues 371–390 (EEEIAPSTEEDGSEELEADS) the composition is skewed to acidic residues. The interval 371–419 (EEEIAPSTEEDGSEELEADSYDSKVGGESPISQRTEERQGAEERSRLRR) is disordered. Basic and acidic residues predominate over residues 404 to 415 (RTEERQGAEERS).

In terms of tissue distribution, component of the acid-insoluble organic matrix of the aragonitic skeleton (at protein level).

It is found in the secreted. This is an uncharacterized protein from Acropora millepora (Staghorn coral).